A 75-amino-acid polypeptide reads, in one-letter code: Antitoxin MT0312 (75 aa).

In terms of biological role, antitoxin component of a type II toxin-antitoxin (TA) system. The protein is Antitoxin MT0312 of Mycobacterium tuberculosis (strain CDC 1551 / Oshkosh).